Consider the following 1303-residue polypeptide: DNA-directed RNA polymerase subunit beta'' (1303 aa).

Positions 225, 299, 306, and 309 each coordinate Zn(2+).

The protein belongs to the RNA polymerase beta' chain family. RpoC2 subfamily. As to quaternary structure, in plastids the minimal PEP RNA polymerase catalytic core is composed of four subunits: alpha, beta, beta', and beta''. When a (nuclear-encoded) sigma factor is associated with the core the holoenzyme is formed, which can initiate transcription. The cofactor is Zn(2+).

It localises to the plastid. The protein resides in the chloroplast. The catalysed reaction is RNA(n) + a ribonucleoside 5'-triphosphate = RNA(n+1) + diphosphate. In terms of biological role, DNA-dependent RNA polymerase catalyzes the transcription of DNA into RNA using the four ribonucleoside triphosphates as substrates. The protein is DNA-directed RNA polymerase subunit beta'' of Rhodomonas salina (Cryptomonas salina).